Here is a 459-residue protein sequence, read N- to C-terminus: Adenylosuccinate synthetase isozyme 1 C (459 aa).

The segment at 1-31 (MSFSWSAKDHKSYTNPPSNPTQGLKRPRNDT) is disordered. Positions 13–22 (YTNPPSNPTQ) are enriched in polar residues. GTP contacts are provided by residues 44–50 (GDEGKGK) and 72–74 (GHT). Aspartate 45 functions as the Proton acceptor in the catalytic mechanism. Positions 45 and 72 each coordinate Mg(2+). Residue aspartate 45 coordinates substrate. Residues 45–48 (DEGK), 70–73 (NAGH), threonine 165, arginine 179, asparagine 258, threonine 273, and arginine 337 contribute to the IMP site. Histidine 73 functions as the Proton donor in the catalytic mechanism. 333–339 (VTTGRKR) is a substrate binding site. GTP-binding positions include arginine 339, 365–367 (KLD), and 447–450 (GVGK).

It belongs to the adenylosuccinate synthetase family. In terms of assembly, homodimer. It depends on Mg(2+) as a cofactor.

It localises to the cytoplasm. The enzyme catalyses IMP + L-aspartate + GTP = N(6)-(1,2-dicarboxyethyl)-AMP + GDP + phosphate + 2 H(+). The protein operates within purine metabolism; AMP biosynthesis via de novo pathway; AMP from IMP: step 1/2. In terms of biological role, component of the purine nucleotide cycle (PNC), which interconverts IMP and AMP to regulate the nucleotide levels in various tissues, and which contributes to glycolysis and ammoniagenesis. Catalyzes the first committed step in the biosynthesis of AMP from IMP. This chain is Adenylosuccinate synthetase isozyme 1 C (adss1c), found in Salmo salar (Atlantic salmon).